The primary structure comprises 356 residues: Dihydroorotate dehydrogenase (quinone) (356 aa).

FMN is bound by residues 66 to 70 (AGFDK) and threonine 90. Lysine 70 serves as a coordination point for substrate. 115–119 (NRMGF) is a binding site for substrate. Residues asparagine 143 and asparagine 176 each contribute to the FMN site. Position 176 (asparagine 176) interacts with substrate. Catalysis depends on serine 179, which acts as the Nucleophile. Asparagine 181 serves as a coordination point for substrate. FMN-binding residues include lysine 212 and threonine 240. Residue 241–242 (NT) coordinates substrate. FMN is bound by residues glycine 266, glycine 295, and 316 to 317 (YT).

This sequence belongs to the dihydroorotate dehydrogenase family. Type 2 subfamily. In terms of assembly, monomer. Requires FMN as cofactor.

Its subcellular location is the cell membrane. The enzyme catalyses (S)-dihydroorotate + a quinone = orotate + a quinol. Its pathway is pyrimidine metabolism; UMP biosynthesis via de novo pathway; orotate from (S)-dihydroorotate (quinone route): step 1/1. Catalyzes the conversion of dihydroorotate to orotate with quinone as electron acceptor. In Rhodococcus opacus (strain B4), this protein is Dihydroorotate dehydrogenase (quinone).